Reading from the N-terminus, the 968-residue chain is Leucine--tRNA ligase (968 aa).

Residues 1 to 13 are compositionally biased toward polar residues; that stretch reads MTETPTGTQSSRE. The interval 1–22 is disordered; it reads MTETPTGTQSSRETAADDTPRH. Positions 75-86 match the 'HIGH' region motif; it reads PYPSGEGLHVGH. Positions 741–745 match the 'KMSKS' region motif; that stretch reads KIGKS. Residue K744 participates in ATP binding.

The protein belongs to the class-I aminoacyl-tRNA synthetase family.

It is found in the cytoplasm. The catalysed reaction is tRNA(Leu) + L-leucine + ATP = L-leucyl-tRNA(Leu) + AMP + diphosphate. The protein is Leucine--tRNA ligase of Mycolicibacterium vanbaalenii (strain DSM 7251 / JCM 13017 / BCRC 16820 / KCTC 9966 / NRRL B-24157 / PYR-1) (Mycobacterium vanbaalenii).